Reading from the N-terminus, the 2282-residue chain is MELPPPGNRRVSINNPQETSGRVPTTSAGFPTQSSKISLKRSTYAYRPSMMSNRSSGGQSLLPSSILQKTSLNPPGSLQSKPSNLSSVHYADEEGKPLTDKNKDKDKGRGKGKGTGTRLLTMLRKTLQGSQSDEMAIANQTPNLIPFGDVVGCLAIHIKSCRQFSQRFLGQQRFNLFMRVSINNIVKCTKIRHLKAVNNEKNLVLRFGEMKYFSVQVPRRQDDERNFIYLELMHDGGDPESPPIPLGGAESHLYEVIQKGCFTEVMHLMHKNSSICRVEVEFMFSYGNFGYGFSHQLKPLQKAIEPSMFMNIAPPPERTDPVTNVITPQRVEYPAFLSPEFNVSIGVPEASHATVVQLEKLREKPRERLERMKEEYKNMSTWIEKADYLRNLINPKMTKRDNKGSSIPSESNSSALEELERTTYDIHHRKYEAISNEYGDKEGRVIPVLKVLDQNYSEVFLPKSSDSTPLEDVLLPPIHSLQIVEENEMPHLPKTSEPEDRPHEERKSIVFSSDEELMPKHPSILKISSSQQENRRKMEKSPHFSDVLIIPDKPFEDLNTNKKGRPPIELRKSWERHPTDVACSLRKVAFAQKDYTIPVCKAETTEFKPKHQFQKLSKSGLDPFLRNINSKMSFRKKKDHDDGYRNLSTSSAEILEHEDQDPPYPGHSGSAGSDATWAENPSPVTVQMVNRDSLPPDLITATIVISDRKNKLSLDSVFNSANSLNTKSIFASDNPVVSLTKLSDSDNKLITDSSFNTTKPSNRRLSKDSNFNTTKPSDRKLSSDPSSNTTKPSDTKLFSDPSSNKLSQGPSSNASQLSGSNRLSHNPSINGNKSSYTSDLNKVSRDPSIVSTISSDPNKLSRDPSFVLAKSSDPNKLSHYPSIISAKSSDPNKLSHDPSFVSARSSDPNKLSHDPSIISARSSDPIKLSRDPSFVSARSSDPNKLSHDPSIISARSSDPNKLSRDPSINSTKLSDPSKLSRDPSIFSTKSSDPNKLYRVPSIISGMSSNPKLSRDPSIISGMSSDPKLSRDPSIISAKSSDPNKLSHDPSIISGMSSNPNKLSHDPSIISMKLSDMSKLSRESSINASKSSDTNQLSYDPNIISAKSLDSNNSSASSSPTVNSDTTTNAAEPSGTKNMLDPVVSTIDSSDKQSKLEWLPNVQGASSVTENINTHRSSNSVNFTSDIDILKQSIVLKSILSKNLQDLSDELFSKSELYTNDEGYSPPPSVHSRPSDSTDDRVLGKVQDLNSWRSSKDLLNSQVLLSPVVKNSPQDLLPEGEPGKSSDIEDYVSEKLLEAAGRNFPMNRKSSFKKKHLVSEESSSEHVLSGSIYEYVIKQIFTAPIFSQLGIGIKSSSEARMDSQNQLLTPWERSVTSHIINYEEKDSDVNLSQSKSIISQIIQSFPVNTLLESGVIKVIELDKEHQNSLLDSQTTSSTEQYSDSRSQIKLLSRQNTSSINPLDSSVSGAEYTEDCQSISTQESKYPVRDTKSDSPNDTEEMELDSNLESSSSSLDKVKDTDTAKLKNILKNIFSIFFKYNQSERRQQPEKDSESLIKHSSSSGSEHLEKTQENFNKADKKVDRKPILNPKLRMFLEKLSETEVKNLKSELSKHIQHYLVERLTESGHITKEDLPTIYHKLYLMNEKVELKEQTPFQEKYSETVKEIMSFVNNFNHHFIDKHLETKLRGFLSEILQNYFLKNLSVSNLFNETDAMALHASMSPVRSKSELGQDIADGNFGSSLKINMQYPVTKSLQHYLQDLSENELLSLKTDLSKYLQVLFIEKLYKSGLVSERQLKGISQEIISLHSPSIPLKHIKTNLPFRNESYFMREDSEEQMKYLKNGQNAALHVLLKDKCGETELSRKKERESSFSQILKENLPAIWEQKNIYTREEETLNLIQMQSFLNKNNQANPLTRSPERPSDISLKKQKKDHGFMQFTQVEGSVYKTEIQDPYSWDSRSKTIQSKPCLEKTLKMKLLDKRENNNFYKLTAQEKLDTEFSSYLKLPNCKIPKEKEPISRLSFPTWKTNTFIHVKPEIGEQSKLDHYYQRLKGNNNNNKKHLVTFAQFKNEMETLYRNPYEACNEKRAKISESQSFKYKEKEKSSRPFFFPEVLKRENTKSKRKERDHATKPKKSFHKIVRLLPATLPTTRPHLRKSAPRNLLHWTARRTIHDCLDRFDDLHAPTVKCPKKSKSGARLLGKSPEDSHNQAKHCARPYTAPEPNKRRESAAWKFASPRMVSAGLLHLYVTPAYGIRKVRSKRKLKEDIEKRPLISEIIQMLDNAE.

The disordered stretch occupies residues Met-1–Arg-118. Composition is skewed to polar residues over residues Val-11–Arg-41 and Met-50–Ser-87. The segment covering Tyr-90 to Arg-109 has biased composition (basic and acidic residues). The 136-residue stretch at Gln-131 to Met-266 folds into the C2 domain. 10 disordered regions span residues Met-397–Leu-416, Glu-656–Glu-679, Asn-747–Pro-1066, Ser-1104–Ser-1153, Tyr-1217–Arg-1240, Asn-1426–Ser-1445, Arg-1452–Lys-1515, Glu-1542–Thr-1569, Asn-1908–Gln-1928, and Pro-2187–Lys-2222. Composition is skewed to polar residues over residues Ile-750–Pro-760, Ser-783–Pro-792, Asp-800–Asn-841, Ile-849–Asn-858, and Ser-953–Ser-974. Residues Ser-1104–Ser-1123 are compositionally biased toward low complexity. Residues Asp-1124 to Lys-1136 show a composition bias toward polar residues. Polar residues-rich tracts occupy residues Arg-1452 to Ser-1466 and Asp-1473 to Ser-1482. Residues Tyr-1484–Ser-1493 are compositionally biased toward basic and acidic residues. Over residues Asn-1495–Ser-1504 the composition is skewed to acidic residues. 2 stretches are compositionally biased toward basic and acidic residues: residues Glu-1542 to Ile-1555 and Ser-1916 to Leu-1925.

In terms of assembly, component of the CatSper complex or CatSpermasome composed of the core pore-forming members CATSPER1, CATSPER2, CATSPER3 and CATSPER4 as well as auxiliary members CATSPERB, CATSPERG, CATSPERD, CATSPERE, CATSPERZ, C2CD6/CATSPERT, SLCO6C1, TMEM249, TMEM262 and EFCAB9. HSPA1 may be an additional auxiliary complex member. The core complex members CATSPER1, CATSPER2, CATSPER3 and CATSPER4 form a heterotetrameric channel. The auxiliary CATSPERB, CATSPERG, CATSPERD and CATSPERE subunits form a pavilion-like structure over the pore which stabilizes the complex through interactions with CATSPER4, CATSPER3, CATSPER1 and CATSPER2 respectively. SLCO6C1 interacts with CATSPERE and TMEM262/CATSPERH interacts with CATSPERB, further stabilizing the complex. C2CD6/CATSPERT interacts at least with CATSPERD and is required for targeting the CatSper complex in the flagellar membrane. As to expression, expressed in cauda sperm (at protein level).

It is found in the cell projection. Its subcellular location is the cilium. The protein resides in the flagellum membrane. Functionally, auxiliary component of the CatSper complex, a complex involved in sperm cell hyperactivation. Sperm cell hyperactivation is needed for sperm motility which is essential late in the preparation of sperm for fertilization. Required for CatSper complex targeting and trafficking into the quadrilinear nanodomains. Targets the preassembled CatSper complexes to elongating flagella, where it links the channel-carrying vesicles and motor proteins. This Mus musculus (Mouse) protein is Cation channel sperm-associated targeting subunit tau.